The following is a 227-amino-acid chain: Phosphoribosylformylglycinamidine synthase subunit PurQ (227 aa).

The region spanning 3–225 (FAVIVLPGSN…VKNWRETHVT (223 aa)) is the Glutamine amidotransferase type-1 domain. Cys86 functions as the Nucleophile in the catalytic mechanism. Residues His194 and Glu196 contribute to the active site.

Part of the FGAM synthase complex composed of 1 PurL, 1 PurQ and 2 PurS subunits.

It is found in the cytoplasm. It carries out the reaction N(2)-formyl-N(1)-(5-phospho-beta-D-ribosyl)glycinamide + L-glutamine + ATP + H2O = 2-formamido-N(1)-(5-O-phospho-beta-D-ribosyl)acetamidine + L-glutamate + ADP + phosphate + H(+). It catalyses the reaction L-glutamine + H2O = L-glutamate + NH4(+). Its pathway is purine metabolism; IMP biosynthesis via de novo pathway; 5-amino-1-(5-phospho-D-ribosyl)imidazole from N(2)-formyl-N(1)-(5-phospho-D-ribosyl)glycinamide: step 1/2. Its function is as follows. Part of the phosphoribosylformylglycinamidine synthase complex involved in the purines biosynthetic pathway. Catalyzes the ATP-dependent conversion of formylglycinamide ribonucleotide (FGAR) and glutamine to yield formylglycinamidine ribonucleotide (FGAM) and glutamate. The FGAM synthase complex is composed of three subunits. PurQ produces an ammonia molecule by converting glutamine to glutamate. PurL transfers the ammonia molecule to FGAR to form FGAM in an ATP-dependent manner. PurS interacts with PurQ and PurL and is thought to assist in the transfer of the ammonia molecule from PurQ to PurL. The chain is Phosphoribosylformylglycinamidine synthase subunit PurQ from Bacillus subtilis (strain 168).